We begin with the raw amino-acid sequence, 557 residues long: MIKKITALTLLVSTALSAETLPDSHMMQDMSMGESRRALQDSTREVNQLIEQRRYQQLKQQRLLAEPAAPALPQSAQCLPIAGVYLQGVTLLSPADLSALSGLPEQCISSNDINRLTRELTRLYVQKGYITARVQIVRPNSQGELGLSVTEGFIEKIEGGDRWVNSRLLFPGLEGKPLKLTELDQGLDQANRLQSNTTKLDILPGRQVGGSVIRLRNQHAKPWLITAGTDNYGQKSTGRWLARATATLDSPFGLSDFVSLNANSTLENPAHRYNRAYTLLYSLPYGAFTFSGFASFSSYENHQQLPHNVVKLHGQTQQYGLRSDYVFYRDHDQIDSLSGQLTYKRIDNYFESVRLEVSSPTLTLAELSASHLQILPNGVFSANLSVEQGMPWLGAGRHPSSVHLDSQFTKGKLFANLSQRLRLGDATYQLNNLFYGQYSRDPLPGVEWLSLTDRSAVRGFSRSTQSGDNGWYLQNTLSRSFNLGATTLTPRLGADVGRILPRQDNSGWRSSAGISTGATLRYQRALVDLEVSRGWILSNHATPEDPVQVLARFSYTF.

Residues 1-18 form the signal peptide; the sequence is MIKKITALTLLVSTALSA. The POTRA domain occupies 79–152; sequence LPIAGVYLQG…GELGLSVTEG (74 aa).

Belongs to the TPS (TC 1.B.20) family.

The protein localises to the cell outer membrane. Functionally, interacts with the cell-bound hemolysin. Necessary for the extracellular secretion and activation of hemolysin. Its function is as follows. Member of a two partner secretion pathway (TPS) in which it mediates the secretion of hemolysin. In Serratia marcescens, this protein is Hemolysin transporter protein ShlB (shlB).